The chain runs to 316 residues: Bifunctional protein FolD (316 aa).

Residues 165 to 167 and I231 contribute to the NADP(+) site; that span reads GKS.

The protein belongs to the tetrahydrofolate dehydrogenase/cyclohydrolase family. In terms of assembly, homodimer.

It catalyses the reaction (6R)-5,10-methylene-5,6,7,8-tetrahydrofolate + NADP(+) = (6R)-5,10-methenyltetrahydrofolate + NADPH. The enzyme catalyses (6R)-5,10-methenyltetrahydrofolate + H2O = (6R)-10-formyltetrahydrofolate + H(+). Its pathway is one-carbon metabolism; tetrahydrofolate interconversion. Catalyzes the oxidation of 5,10-methylenetetrahydrofolate to 5,10-methenyltetrahydrofolate and then the hydrolysis of 5,10-methenyltetrahydrofolate to 10-formyltetrahydrofolate. The protein is Bifunctional protein FolD of Sphingobium chlorophenolicum.